A 236-amino-acid polypeptide reads, in one-letter code: Small ribosomal subunit protein uS2c (236 aa).

This sequence belongs to the universal ribosomal protein uS2 family.

The protein localises to the plastid. It localises to the chloroplast. The polypeptide is Small ribosomal subunit protein uS2c (rps2) (Buxus microphylla (Littleleaf boxwood)).